The sequence spans 231 residues: PIAGSMVLAAILLKLGGYGIIRMMQIMPTTKTDMFLPLVVLALWGAVLANLTCLQQTDLKSLIAYSSISHMGLVAAAIIIQTPWGLSGGMTLMIAHGFTSSALFCLANTTYERTHTRILILTRGFHNILPMATTWWLLTNLMNIATPPTTNFTSELLIMSALFNWCPTTIIMLGLSMLITASYSLHMFLSTQMGPPPSNNLTEPSHSREHLLMILHIMPLLMISLKSELII.

6 consecutive transmembrane segments (helical) span residues 1 to 21 (PIAG…YGII), 34 to 54 (MFLP…LTCL), 63 to 85 (IAYS…TPWG), 89 to 111 (GMTL…NTTY), 118 to 138 (ILIL…WWLL), and 156 to 176 (LLIM…LGLS).

The protein belongs to the complex I subunit 4 family.

Its subcellular location is the mitochondrion membrane. The catalysed reaction is a ubiquinone + NADH + 5 H(+)(in) = a ubiquinol + NAD(+) + 4 H(+)(out). Functionally, core subunit of the mitochondrial membrane respiratory chain NADH dehydrogenase (Complex I) that is believed to belong to the minimal assembly required for catalysis. Complex I functions in the transfer of electrons from NADH to the respiratory chain. The immediate electron acceptor for the enzyme is believed to be ubiquinone. This chain is NADH-ubiquinone oxidoreductase chain 4 (MT-ND4), found in Calloselasma rhodostoma (Malayan pit viper).